We begin with the raw amino-acid sequence, 372 residues long: NAD(P)H-quinone oxidoreductase subunit 1 (372 aa).

The next 9 membrane-spanning stretches (helical) occupy residues 27–47 (LLWL…GVLV), 65–85 (PEYI…KLIF), 97–117 (WLFT…YIIV), 128–148 (LAMG…GLLM), 176–196 (LALA…VEIV), 204–224 (ILSW…IAAL), 254–274 (FALF…LVSV), 308–328 (VLGI…AILL), and 347–367 (FLLP…LAFP).

It belongs to the complex I subunit 1 family. In terms of assembly, NDH-1 is composed of at least 11 different subunits.

It localises to the cellular thylakoid membrane. It catalyses the reaction a plastoquinone + NADH + (n+1) H(+)(in) = a plastoquinol + NAD(+) + n H(+)(out). The catalysed reaction is a plastoquinone + NADPH + (n+1) H(+)(in) = a plastoquinol + NADP(+) + n H(+)(out). Functionally, NDH-1 shuttles electrons from an unknown electron donor, via FMN and iron-sulfur (Fe-S) centers, to quinones in the respiratory and/or the photosynthetic chain. The immediate electron acceptor for the enzyme in this species is believed to be plastoquinone. Couples the redox reaction to proton translocation, and thus conserves the redox energy in a proton gradient. The protein is NAD(P)H-quinone oxidoreductase subunit 1 of Thermosynechococcus vestitus (strain NIES-2133 / IAM M-273 / BP-1).